A 308-amino-acid polypeptide reads, in one-letter code: S-adenosylmethionine-dependent nucleotide dehydratase (308 aa).

In terms of domain architecture, Radical SAM core spans 7–253; it reads SIQELVINFH…WQSYLMINPE (247 aa). Residues Cys-21, Cys-25, and Cys-28 each coordinate [4Fe-4S] cluster.

Belongs to the radical SAM superfamily. Viperin family. The cofactor is [4Fe-4S] cluster.

The enzyme catalyses CTP + AH2 + S-adenosyl-L-methionine = 3'-deoxy-3',4'-didehydro-CTP + 5'-deoxyadenosine + L-methionine + A + H2O + H(+). It catalyses the reaction GTP + AH2 + S-adenosyl-L-methionine = 3'-deoxy-3',4'-didehydro-GTP + 5'-deoxyadenosine + L-methionine + A + H2O + H(+). The catalysed reaction is UTP + AH2 + S-adenosyl-L-methionine = 3'-deoxy-3',4'-didehydro-UTP + 5'-deoxyadenosine + L-methionine + A + H2O + H(+). Expression of pVip58 in E.coli (strain MG1655) confers resistance to phages lambda, P1 and T7; delays culture collapse upon infection with T7. Catalyzes the conversion of cytidine triphosphate (CTP) to 3'-deoxy-3',4'-didehydro-CTP (ddhCTP), guanosine triphosphate (GTP) to 3'-deoxy-3',4'-didehydro-GTP (ddhGTP) and uridine triphosphate (UTP) to 3'-deoxy-3',4'-didehydro-UTP (ddhUTP), probably via a SAM-dependent radical mechanism. The modified nucleotide represses transcription from T7 RNA polymerase-directed genes (possibly by acting as chain terminators), strongly suggesting these nucleotides block viral polymerase transcription. The sequence is that of S-adenosylmethionine-dependent nucleotide dehydratase from Pseudoalteromonas ulvae.